A 343-amino-acid chain; its full sequence is L-threonine 3-dehydrogenase (343 aa).

Cys40 provides a ligand contact to Zn(2+). Residues Thr42 and His45 each act as charge relay system in the active site. Zn(2+)-binding residues include His65, Glu66, Cys95, Cys98, Cys101, and Cys109. Residues Ile177, Asp197, Arg202, Leu264–Ile266, and Ile288–Tyr289 contribute to the NAD(+) site.

This sequence belongs to the zinc-containing alcohol dehydrogenase family. Homotetramer. Zn(2+) serves as cofactor.

Its subcellular location is the cytoplasm. The enzyme catalyses L-threonine + NAD(+) = (2S)-2-amino-3-oxobutanoate + NADH + H(+). The protein operates within amino-acid degradation; L-threonine degradation via oxydo-reductase pathway; glycine from L-threonine: step 1/2. Catalyzes the NAD(+)-dependent oxidation of L-threonine to 2-amino-3-ketobutyrate. This is L-threonine 3-dehydrogenase from Photobacterium profundum (strain SS9).